A 357-amino-acid polypeptide reads, in one-letter code: Protein pelota homolog (357 aa).

This sequence belongs to the eukaryotic release factor 1 family. Pelota subfamily. In terms of assembly, monomer. The cofactor is a divalent metal cation.

The protein localises to the cytoplasm. In terms of biological role, may function in recognizing stalled ribosomes, interact with stem-loop structures in stalled mRNA molecules, and effect endonucleolytic cleavage of the mRNA. May play a role in the release non-functional ribosomes and degradation of damaged mRNAs. Has endoribonuclease activity. This chain is Protein pelota homolog, found in Thermococcus kodakarensis (strain ATCC BAA-918 / JCM 12380 / KOD1) (Pyrococcus kodakaraensis (strain KOD1)).